Here is a 309-residue protein sequence, read N- to C-terminus: MSIRIVPQEQLEQNEQSTREGHIPPLLFANLKSLYSSRAERLRQLAEDHPLGDYLTFAAGVVEAQQKVLHDHPLHLDLSDVLKQSGERPPLDIAVFPRDAHWHTLLRALIEELKPDASGQVLSTLENLEKASEQELEEQATALLQHEFRAENNDKAPFIWAALSLFWAQMAGLLPGKARAVPGEHRQFCPVCGSIPVSGVVQLGTSSGLRYLHCNLCESEWHMVRVKCSNCEESSELNYWSLDSENSAIKAESCGHCGTYVKLLYQEKDHRVEAVADDLASLVLDVKMEEEGFSRSSINPFLFPESSIE.

This sequence belongs to the FdhE family.

It is found in the cytoplasm. Necessary for formate dehydrogenase activity. In Pectobacterium atrosepticum (strain SCRI 1043 / ATCC BAA-672) (Erwinia carotovora subsp. atroseptica), this protein is Protein FdhE homolog.